The sequence spans 261 residues: uncharacterized protein (261 aa).

The N-terminal stretch at 1-22 (MKYYGKCISYISILILTFFIGG) is a signal peptide. C23 is lipidated: N-palmitoyl cysteine. C23 carries S-diacylglycerol cysteine lipidation.

This sequence belongs to the staphylococcal tandem lipoprotein family.

It localises to the cell membrane. This is an uncharacterized protein from Staphylococcus epidermidis (strain ATCC 12228 / FDA PCI 1200).